The chain runs to 361 residues: Phosphate acyltransferase (361 aa).

Residues 342–361 (ADGAAAEQGPTPRRTAPRQT) form a disordered region.

This sequence belongs to the PlsX family. In terms of assembly, homodimer. Probably interacts with PlsY.

The protein resides in the cytoplasm. It catalyses the reaction a fatty acyl-[ACP] + phosphate = an acyl phosphate + holo-[ACP]. The protein operates within lipid metabolism; phospholipid metabolism. Functionally, catalyzes the reversible formation of acyl-phosphate (acyl-PO(4)) from acyl-[acyl-carrier-protein] (acyl-ACP). This enzyme utilizes acyl-ACP as fatty acyl donor, but not acyl-CoA. The chain is Phosphate acyltransferase from Anaeromyxobacter sp. (strain K).